Reading from the N-terminus, the 396-residue chain is S-adenosylmethionine synthase (396 aa).

H16 is an ATP binding site. D18 contributes to the Mg(2+) binding site. K(+) is bound at residue E44. 2 residues coordinate L-methionine: E57 and Q100. The flexible loop stretch occupies residues 100–110 (QSVDIAQGVDR). ATP contacts are provided by residues 165–167 (DAK), D240, 246–247 (RK), A263, and K267. L-methionine is bound at residue D240. K271 contacts L-methionine.

This sequence belongs to the AdoMet synthase family. In terms of assembly, homotetramer; dimer of dimers. The cofactor is Mg(2+). K(+) serves as cofactor.

The protein resides in the cytoplasm. The enzyme catalyses L-methionine + ATP + H2O = S-adenosyl-L-methionine + phosphate + diphosphate. It functions in the pathway amino-acid biosynthesis; S-adenosyl-L-methionine biosynthesis; S-adenosyl-L-methionine from L-methionine: step 1/1. Its function is as follows. Catalyzes the formation of S-adenosylmethionine (AdoMet) from methionine and ATP. The overall synthetic reaction is composed of two sequential steps, AdoMet formation and the subsequent tripolyphosphate hydrolysis which occurs prior to release of AdoMet from the enzyme. The protein is S-adenosylmethionine synthase of Pseudomonas entomophila (strain L48).